Consider the following 215-residue polypeptide: Vesicle-trafficking protein SEC22b (215 aa).

At 1–190 (MVLLTMIARV…RQDAKYLNMR (190 aa)) the chain is on the cytoplasmic side. One can recognise a Longin domain in the interval 6 to 119 (MIARVADGLP…YSFIEFDNYI (114 aa)). The v-SNARE coiled-coil homology domain maps to 134 to 194 (NLSSVNTELQ…KYLNMRSTYA (61 aa)). The helical transmembrane segment at 191–213 (STYAKLAAVAVFSVMLIVYIRFW) threads the bilayer. Over 214 to 215 (WL) the chain is Lumenal.

It belongs to the synaptobrevin family. As to quaternary structure, component of 2 distinct SNARE complexes.

The protein localises to the endoplasmic reticulum membrane. The protein resides in the endoplasmic reticulum-Golgi intermediate compartment membrane. It localises to the golgi apparatus. It is found in the cis-Golgi network membrane. Its subcellular location is the trans-Golgi network membrane. The protein localises to the melanosome. SNARE involved in targeting and fusion of ER-derived transport vesicles with the Golgi complex as well as Golgi-derived retrograde transport vesicles with the ER. This is Vesicle-trafficking protein SEC22b from Xenopus tropicalis (Western clawed frog).